We begin with the raw amino-acid sequence, 381 residues long: Succinyl-diaminopimelate desuccinylase (381 aa).

His-68 is a binding site for Zn(2+). Asp-70 is an active-site residue. Residue Asp-101 participates in Zn(2+) binding. Glu-135 serves as the catalytic Proton acceptor. 3 residues coordinate Zn(2+): Glu-136, Glu-164, and His-350.

It belongs to the peptidase M20A family. DapE subfamily. In terms of assembly, homodimer. It depends on Zn(2+) as a cofactor. Co(2+) is required as a cofactor.

It carries out the reaction N-succinyl-(2S,6S)-2,6-diaminopimelate + H2O = (2S,6S)-2,6-diaminopimelate + succinate. Its pathway is amino-acid biosynthesis; L-lysine biosynthesis via DAP pathway; LL-2,6-diaminopimelate from (S)-tetrahydrodipicolinate (succinylase route): step 3/3. Catalyzes the hydrolysis of N-succinyl-L,L-diaminopimelic acid (SDAP), forming succinate and LL-2,6-diaminopimelate (DAP), an intermediate involved in the bacterial biosynthesis of lysine and meso-diaminopimelic acid, an essential component of bacterial cell walls. The protein is Succinyl-diaminopimelate desuccinylase (dapE) of Neisseria meningitidis serogroup B (strain ATCC BAA-335 / MC58).